Reading from the N-terminus, the 295-residue chain is Phosphatidylserine decarboxylase proenzyme (295 aa).

Residues aspartate 113, histidine 169, and serine 256 each act as charge relay system; for autoendoproteolytic cleavage activity in the active site. Serine 256 serves as the catalytic Schiff-base intermediate with substrate; via pyruvic acid; for decarboxylase activity. Serine 256 carries the post-translational modification Pyruvic acid (Ser); by autocatalysis.

The protein belongs to the phosphatidylserine decarboxylase family. PSD-B subfamily. Prokaryotic type II sub-subfamily. In terms of assembly, heterodimer of a large membrane-associated beta subunit and a small pyruvoyl-containing alpha subunit. The cofactor is pyruvate. In terms of processing, is synthesized initially as an inactive proenzyme. Formation of the active enzyme involves a self-maturation process in which the active site pyruvoyl group is generated from an internal serine residue via an autocatalytic post-translational modification. Two non-identical subunits are generated from the proenzyme in this reaction, and the pyruvate is formed at the N-terminus of the alpha chain, which is derived from the carboxyl end of the proenzyme. The autoendoproteolytic cleavage occurs by a canonical serine protease mechanism, in which the side chain hydroxyl group of the serine supplies its oxygen atom to form the C-terminus of the beta chain, while the remainder of the serine residue undergoes an oxidative deamination to produce ammonia and the pyruvoyl prosthetic group on the alpha chain. During this reaction, the Ser that is part of the protease active site of the proenzyme becomes the pyruvoyl prosthetic group, which constitutes an essential element of the active site of the mature decarboxylase.

It is found in the cell membrane. It carries out the reaction a 1,2-diacyl-sn-glycero-3-phospho-L-serine + H(+) = a 1,2-diacyl-sn-glycero-3-phosphoethanolamine + CO2. It participates in phospholipid metabolism; phosphatidylethanolamine biosynthesis; phosphatidylethanolamine from CDP-diacylglycerol: step 2/2. Catalyzes the formation of phosphatidylethanolamine (PtdEtn) from phosphatidylserine (PtdSer). The polypeptide is Phosphatidylserine decarboxylase proenzyme (Clostridium botulinum (strain Langeland / NCTC 10281 / Type F)).